A 524-amino-acid polypeptide reads, in one-letter code: Na(+)/H(+) antiporter NhaG (524 aa).

A run of 11 helical transmembrane segments spans residues 6 to 26 (LHHI…ITAI), 33 to 53 (PYPI…IPLF), 59 to 79 (FITE…PALL), 98 to 118 (VLAL…SSMW), 126 to 146 (AAFV…LSIF), 169 to 189 (LAVV…DLGI), 193 to 213 (GLGL…GGVL), 242 to 262 (FLLA…AALI), 283 to 303 (FWDV…GLEI), 312 to 332 (WGLA…AVYI), and 374 to 394 (DILV…GLTI).

It belongs to the monovalent cation:proton antiporter 1 (CPA1) transporter (TC 2.A.36) family.

The protein resides in the cell membrane. Na(+)/H(+) antiporter that extrudes sodium in exchange for external protons. Can also transport lithium. This is Na(+)/H(+) antiporter NhaG (nhaG) from Bacillus atrophaeus.